The chain runs to 171 residues: UPF0316 protein Exig_2248 (171 aa).

The next 3 membrane-spanning stretches (helical) occupy residues 4 to 24 (ILLI…RTIM), 31 to 51 (IIAG…LGIV), and 57 to 77 (TVGM…GGFV).

This sequence belongs to the UPF0316 family.

The protein localises to the cell membrane. The sequence is that of UPF0316 protein Exig_2248 from Exiguobacterium sibiricum (strain DSM 17290 / CCUG 55495 / CIP 109462 / JCM 13490 / 255-15).